The chain runs to 627 residues: 1-deoxy-D-xylulose-5-phosphate synthase (627 aa).

Residues histidine 75 and 116-118 (AHS) each bind thiamine diphosphate. Mg(2+) is bound at residue aspartate 147. Thiamine diphosphate is bound by residues 148 to 149 (GA), asparagine 177, tyrosine 284, and glutamate 366. Asparagine 177 is a Mg(2+) binding site.

The protein belongs to the transketolase family. DXPS subfamily. As to quaternary structure, homodimer. Requires Mg(2+) as cofactor. Thiamine diphosphate is required as a cofactor.

The enzyme catalyses D-glyceraldehyde 3-phosphate + pyruvate + H(+) = 1-deoxy-D-xylulose 5-phosphate + CO2. The protein operates within metabolic intermediate biosynthesis; 1-deoxy-D-xylulose 5-phosphate biosynthesis; 1-deoxy-D-xylulose 5-phosphate from D-glyceraldehyde 3-phosphate and pyruvate: step 1/1. Functionally, catalyzes the acyloin condensation reaction between C atoms 2 and 3 of pyruvate and glyceraldehyde 3-phosphate to yield 1-deoxy-D-xylulose-5-phosphate (DXP). The sequence is that of 1-deoxy-D-xylulose-5-phosphate synthase from Bordetella petrii (strain ATCC BAA-461 / DSM 12804 / CCUG 43448).